The sequence spans 174 residues: Glyoxylase I 4 (174 aa).

The 123-residue stretch at 13–135 folds into the VOC domain; the sequence is SLNHVSVLCR…DGFMIEICNC (123 aa). E131 acts as the Proton donor/acceptor in catalysis.

This sequence belongs to the glyoxalase I family. Mostly expressed in roots, and, to a lower extent, in leaves, flowers, seeds and siliques.

The protein localises to the cell membrane. It localises to the cytoplasm. Involved in the detoxification and scavenging of methylglyoxal (MG), a cytotoxic aldehyde produced in response to primary metabolism alteration observed during biotic and abiotic stresses. Modulates cross-talk between salicylic acid (SA) and jasmonic acid (JA) signaling pathways during defense responses to pathogens such as Botrytis cinerea. This chain is Glyoxylase I 4, found in Arabidopsis thaliana (Mouse-ear cress).